The chain runs to 203 residues: ATP-dependent Clp protease proteolytic subunit 1 (203 aa).

The active-site Nucleophile is Ser98. The active site involves His123.

The protein belongs to the peptidase S14 family. As to quaternary structure, fourteen ClpP subunits assemble into 2 heptameric rings which stack back to back to give a disk-like structure with a central cavity, resembling the structure of eukaryotic proteasomes.

It localises to the cytoplasm. It catalyses the reaction Hydrolysis of proteins to small peptides in the presence of ATP and magnesium. alpha-casein is the usual test substrate. In the absence of ATP, only oligopeptides shorter than five residues are hydrolyzed (such as succinyl-Leu-Tyr-|-NHMec, and Leu-Tyr-Leu-|-Tyr-Trp, in which cleavage of the -Tyr-|-Leu- and -Tyr-|-Trp bonds also occurs).. Cleaves peptides in various proteins in a process that requires ATP hydrolysis. Has a chymotrypsin-like activity. Plays a major role in the degradation of misfolded proteins. The chain is ATP-dependent Clp protease proteolytic subunit 1 from Chlamydia felis (strain Fe/C-56) (Chlamydophila felis).